A 186-amino-acid chain; its full sequence is Ribosome-recycling factor (186 aa).

The protein belongs to the RRF family.

Its subcellular location is the cytoplasm. In terms of biological role, responsible for the release of ribosomes from messenger RNA at the termination of protein biosynthesis. May increase the efficiency of translation by recycling ribosomes from one round of translation to another. In Chlorobium luteolum (strain DSM 273 / BCRC 81028 / 2530) (Pelodictyon luteolum), this protein is Ribosome-recycling factor.